The chain runs to 173 residues: RTX-III toxin-activating lysine-acyltransferase ApxIIC (173 aa).

Active-site residues include His-29 and Asp-98.

This sequence belongs to the RTX toxin acyltransferase family. Homodimer.

It localises to the cytoplasm. It carries out the reaction a fatty acyl-[ACP] + L-lysyl-[protein] = N(6)-(fatty acyl)-L-lysyl-[protein] + holo-[ACP] + H(+). Protein-lysine acyltransferase that catalyzes fatty acylation of the protoxin, thereby converting it to the active toxin. In Actinobacillus pleuropneumoniae (Haemophilus pleuropneumoniae), this protein is RTX-III toxin-activating lysine-acyltransferase ApxIIC (apxIIIC).